Here is a 254-residue protein sequence, read N- to C-terminus: Imidazole glycerol phosphate synthase subunit HisF (254 aa).

Residues Asp-11 and Asp-130 contribute to the active site.

Belongs to the HisA/HisF family. In terms of assembly, heterodimer of HisH and HisF.

It is found in the cytoplasm. It catalyses the reaction 5-[(5-phospho-1-deoxy-D-ribulos-1-ylimino)methylamino]-1-(5-phospho-beta-D-ribosyl)imidazole-4-carboxamide + L-glutamine = D-erythro-1-(imidazol-4-yl)glycerol 3-phosphate + 5-amino-1-(5-phospho-beta-D-ribosyl)imidazole-4-carboxamide + L-glutamate + H(+). The protein operates within amino-acid biosynthesis; L-histidine biosynthesis; L-histidine from 5-phospho-alpha-D-ribose 1-diphosphate: step 5/9. Its function is as follows. IGPS catalyzes the conversion of PRFAR and glutamine to IGP, AICAR and glutamate. The HisF subunit catalyzes the cyclization activity that produces IGP and AICAR from PRFAR using the ammonia provided by the HisH subunit. The chain is Imidazole glycerol phosphate synthase subunit HisF from Gloeobacter violaceus (strain ATCC 29082 / PCC 7421).